We begin with the raw amino-acid sequence, 378 residues long: Protein RecA (378 aa).

79 to 86 (GPESSGKT) is an ATP binding site.

It belongs to the RecA family.

The protein resides in the cytoplasm. Functionally, can catalyze the hydrolysis of ATP in the presence of single-stranded DNA, the ATP-dependent uptake of single-stranded DNA by duplex DNA, and the ATP-dependent hybridization of homologous single-stranded DNAs. It interacts with LexA causing its activation and leading to its autocatalytic cleavage. In Streptococcus equi subsp. zooepidemicus (strain MGCS10565), this protein is Protein RecA.